Consider the following 63-residue polypeptide: MRFRRLTPGYFRVLQMQVAGELKAEPRSLLAGVVATVLAVLGLGGSCYAVWKMVGQRRVPRAP.

A helical membrane pass occupies residues 30-50; the sequence is LAGVVATVLAVLGLGGSCYAV.

The protein localises to the membrane. The polypeptide is Transmembrane protein ZNF593OS (Homo sapiens (Human)).